Consider the following 192-residue polypeptide: Putative acetyltransferase YjbC (192 aa).

The N-acetyltransferase domain occupies 1–139 (MNWYEKLSEY…MEILYWSPKT (139 aa)).

It is found in the cytoplasm. This is Putative acetyltransferase YjbC (yjbC) from Bacillus subtilis (strain 168).